Consider the following 408-residue polypeptide: Homogentisate geranylgeranyltransferase (408 aa).

The N-terminal 62 residues, 1-62 (MQAVTAAAAA…TVMHKFSAIS (62 aa)), are a transit peptide targeting the chloroplast. The next 9 membrane-spanning stretches (helical) occupy residues 122–142 (HTIF…MKSI), 156–176 (ALTA…LYDI), 194–214 (SVAT…SIGI), 221–241 (LMCA…EAPF), 248–268 (ALLA…LAFF), 286–306 (LVFA…FKDI), 329–349 (VYQL…LVGA), 352–372 (TNLF…LTLW), and 386–406 (VTSF…LIPF).

This sequence belongs to the UbiA prenyltransferase family. As to expression, expressed in seeds.

The protein localises to the plastid. Its subcellular location is the chloroplast membrane. It catalyses the reaction homogentisate + (2E,6E,10E)-geranylgeranyl diphosphate + H(+) = 6-geranylgeranyl-2-methylbenzene-1,4-diol + CO2 + diphosphate. The protein operates within cofactor biosynthesis; tocopherol biosynthesis. Involved in the synthesis of tocotrienol (vitamin E). Catalyzes the condensation of homogentisate and geranylgeranyl diphosphate to form 2-methyl-6-geranylgeranylbenzoquinol. Possesses low activity with phytyl diphosphate as substrate. The protein is Homogentisate geranylgeranyltransferase of Hordeum vulgare (Barley).